We begin with the raw amino-acid sequence, 189 residues long: MAQLYFKYGTMNSGKSIEILKVAHNYEEQGKPVLLMTSSLDTRAGVGTVASRIGMKAEAVAIDEEMSVFDYVNSLPAKPFCVLIDEAQFLNKKHVYDFARVVDELNVPVMAFGLKNDFRNELFEGSKYLLLLADKIEEIKTICWYCSKKATMVIRTIDGKPVYEGEQLQIGGNETYIPVCRKHYFKPEI.

ATP is bound by residues Gly9 to Ser16 and Asp85 to Gln88. Glu86 acts as the Proton acceptor in catalysis. Residues Cys143, Cys146, Cys180, and His183 each contribute to the Zn(2+) site.

The protein belongs to the thymidine kinase family. In terms of assembly, homotetramer.

It is found in the cytoplasm. It catalyses the reaction thymidine + ATP = dTMP + ADP + H(+). This Lactococcus lactis subsp. lactis (strain IL1403) (Streptococcus lactis) protein is Thymidine kinase.